The chain runs to 326 residues: MGDDALTADSGRDETQSLSPFRYFTAAEWGRLRQDTPLPLSQGELEELKGFGERISLDEVSEIYLPLSRLLNLYVGETQELYRVTSDFLGREQDKVPYIIGVAGSVAVGKSTTARILRTLLARWPNHPKVDLITTDGFLYPNKVLEERGLMQRKGFPESFDIKRLLRFLSDVKAGSRHVEAPVYSHFTYDILPGETIPVDYPDILVVEGLNVLQPWKPADGDEPQPFVSDFFDFSIYLDADEASIRRWYIERFLSLRRTSFKDPAAYFHRYSKLTEEEAVETADAIWTSINLANLRKNILPTRQRADLILRKGDDHRIRDVLLRKL.

104-111 (GSVAVGKS) is a binding site for ATP.

The protein belongs to the prokaryotic pantothenate kinase family.

The protein localises to the cytoplasm. The catalysed reaction is (R)-pantothenate + ATP = (R)-4'-phosphopantothenate + ADP + H(+). Its pathway is cofactor biosynthesis; coenzyme A biosynthesis; CoA from (R)-pantothenate: step 1/5. The protein is Pantothenate kinase of Parvibaculum lavamentivorans (strain DS-1 / DSM 13023 / NCIMB 13966).